A 216-amino-acid polypeptide reads, in one-letter code: ATP synthase subunit 5, mitochondrial (216 aa).

The protein belongs to the ATPase delta chain family. In terms of assembly, F-type ATPases have 2 components, CF(1) - the catalytic core - and CF(0) - the membrane proton channel. CF(1) has five subunits: alpha(3), beta(3), gamma(1), delta(1), epsilon(1). CF(0) has three main subunits: a, b and c.

The protein resides in the mitochondrion. It is found in the mitochondrion inner membrane. Its function is as follows. Mitochondrial membrane ATP synthase (F(1)F(0) ATP synthase or Complex V) produces ATP from ADP in the presence of a proton gradient across the membrane which is generated by electron transport complexes of the respiratory chain. F-type ATPases consist of two structural domains, F(1) - containing the extramembraneous catalytic core and F(0) - containing the membrane proton channel, linked together by a central stalk and a peripheral stalk. During catalysis, ATP synthesis in the catalytic domain of F(1) is coupled via a rotary mechanism of the central stalk subunits to proton translocation. Part of the complex F(0) domain and the peripheric stalk, which acts as a stator to hold the catalytic alpha(3)beta(3) subcomplex and subunit a/ATP6 static relative to the rotary elements. This Schizosaccharomyces pombe (strain 972 / ATCC 24843) (Fission yeast) protein is ATP synthase subunit 5, mitochondrial (atp5).